The chain runs to 590 residues: Negative elongation factor D (590 aa).

Positions 15-43 (YGSAAEWGDEADGGQQEDDSGEGEDDAEV) are disordered. Positions 21 to 43 (WGDEADGGQQEDDSGEGEDDAEV) are enriched in acidic residues.

The protein belongs to the NELF-D family. In terms of assembly, the NELF complex is composed of NELFA, NELFB, NELFCD and NELFE; NELFA and NELFCD form a stable subcomplex that binds primarily through NELFCD to the N-terminus of NELFB. Binds RNA which may help to stabilize the NELF complex on nucleic acid. In vitro, the NELFA:NELFCD subcomplex binds to ssDNA and ssRNA in a sequence- and structure-dependent manner. Interacts with ARAF1. Interacts with PCF11. Interacts with NELFB. Interacts with KAT8.

The protein localises to the nucleus. In terms of biological role, essential component of the NELF complex, a complex that negatively regulates the elongation of transcription by RNA polymerase II. The NELF complex, which acts via an association with the DSIF complex and causes transcriptional pausing, is counteracted by the P-TEFb kinase complex. This is Negative elongation factor D (NELFCD) from Pongo abelii (Sumatran orangutan).